Consider the following 266-residue polypeptide: Transmembrane domain-containing protein TMIGD3 (266 aa).

The segment at 1-20 (MEGSPAGPIEQKEARWESSW) is disordered. Residues 55-75 (FLPVMWLFILLSLALISDAMV) form a helical membrane-spanning segment. N-linked (GlcNAc...) asparagine glycosylation is present at N192. A helical membrane pass occupies residues 213–233 (ILIICILITGLGIISVISHLT).

In terms of tissue distribution, expressed in the lung and bone. Expressed at lower levels in osteosarcoma tissues (at protein level).

The protein resides in the membrane. In terms of biological role, plays a suppressive role in osteosarcoma malignancy by inhibiting NF-kappa-B activity. The protein is Transmembrane domain-containing protein TMIGD3 of Homo sapiens (Human).